Consider the following 156-residue polypeptide: Protein eva-1 homolog A (156 aa).

A helical transmembrane segment spans residues 40–60 (ALYFVSGVCIGLFLTLAALVM). Residues 79-100 (DRECSDSSDSEDGSEDTASDLS) are disordered. Residues 84–96 (DSSDSEDGSEDTA) are compositionally biased toward acidic residues. T110 carries the phosphothreonine modification. S118 carries the phosphoserine modification.

The protein belongs to the EVA1 family.

The protein localises to the endoplasmic reticulum membrane. Its subcellular location is the lysosome membrane. Its function is as follows. Acts as a regulator of programmed cell death, mediating both autophagy and apoptosis. In Mus musculus (Mouse), this protein is Protein eva-1 homolog A (Eva1a).